Reading from the N-terminus, the 1140-residue chain is Receptor-type guanylate cyclase gcy-3 (1140 aa).

A signal peptide spans 1 to 21 (MKNVFQLLIPLFFHLFSLVSL). Residues 22–495 (QNIPVSTGTT…CPLPFWEQYG (474 aa)) lie on the Extracellular side of the membrane. 7 N-linked (GlcNAc...) asparagine glycosylation sites follow: N220, N301, N349, N385, N418, N441, and N459. Residues 496 to 516 (ILIFVGAGVFLIMITTNLICF) form a helical membrane-spanning segment. Topologically, residues 517–1140 (LFMIKNRREE…RQYKMDTLKI (624 aa)) are cytoplasmic. The 289-residue stretch at 538–826 (FVKLRELERK…NICEQLRDLM (289 aa)) folds into the Protein kinase domain. Residues 544 to 552 (LERKSKGTS) and K582 contribute to the ATP site. The region spanning 897 to 1027 (TVFFSDVVKF…DTVNTASRME (131 aa)) is the Guanylate cyclase domain. The tract at residues 1083–1140 (PSISNRSTPPVTQERFTVRAPDTPEARSVSSHGSRPSSNHNNNNDPLYRQYKMDTLKI) is disordered. A compositionally biased stretch (polar residues) spans 1084–1097 (SISNRSTPPVTQER). Positions 1109–1126 (RSVSSHGSRPSSNHNNNN) are enriched in low complexity.

Belongs to the adenylyl cyclase class-4/guanylyl cyclase family. As to expression, expressed asymmetrically in ASE right (ASER) sensory neuron and bilaterally in ASI sensory neurons. Expressed in PVT interneuron.

It localises to the cell membrane. The enzyme catalyses GTP = 3',5'-cyclic GMP + diphosphate. Guanylate cyclase involved in the production of the second messenger cGMP. In Caenorhabditis elegans, this protein is Receptor-type guanylate cyclase gcy-3.